A 155-amino-acid polypeptide reads, in one-letter code: MPEAGAIRPDATVLGFDVGSRRIGVAVGTALGAGARAVAVINVHANGPDWVALDRVHKEWRPAGLVVGDPLTLDDKDQPARKRAHAFARELRERYALPVVLIDERSSSVEAAQRFARERADGRKRRRDADALDAMAAAVIVERWLSAPEQATLLP.

It belongs to the YqgF nuclease family.

The protein localises to the cytoplasm. Its function is as follows. Could be a nuclease involved in processing of the 5'-end of pre-16S rRNA. The polypeptide is Putative pre-16S rRNA nuclease (Xanthomonas campestris pv. campestris (strain B100)).